The sequence spans 439 residues: Ribosomal protein uS12 methylthiotransferase RimO (439 aa).

Residues 7–119 form the MTTase N-terminal domain; that stretch reads KQLCLISLGC…IDILIAKKQN (113 aa). Cysteine 16, cysteine 50, cysteine 82, cysteine 151, cysteine 155, and cysteine 158 together coordinate [4Fe-4S] cluster. The region spanning 137–368 is the Radical SAM core domain; sequence TGSSVHAYVK…ALKHQNHSFK (232 aa).

Belongs to the methylthiotransferase family. RimO subfamily. It depends on [4Fe-4S] cluster as a cofactor.

Its subcellular location is the cytoplasm. It catalyses the reaction L-aspartate(89)-[ribosomal protein uS12]-hydrogen + (sulfur carrier)-SH + AH2 + 2 S-adenosyl-L-methionine = 3-methylsulfanyl-L-aspartate(89)-[ribosomal protein uS12]-hydrogen + (sulfur carrier)-H + 5'-deoxyadenosine + L-methionine + A + S-adenosyl-L-homocysteine + 2 H(+). In terms of biological role, catalyzes the methylthiolation of an aspartic acid residue of ribosomal protein uS12. In Helicobacter pylori (strain J99 / ATCC 700824) (Campylobacter pylori J99), this protein is Ribosomal protein uS12 methylthiotransferase RimO.